The following is an 897-amino-acid chain: Valine--tRNA ligase (897 aa).

The 'HIGH' region signature appears at 46 to 56 (PNVTGSLHMGH). Residues 532–536 (KMSKT) carry the 'KMSKS' region motif. Lys-535 contacts ATP. Positions 839 to 897 (LRRSLEKLDKESGVLAARLDNASYLANAPAELVTESRAKLAEQRAQAAILAEQLARLEN) form a coiled coil.

Belongs to the class-I aminoacyl-tRNA synthetase family. ValS type 1 subfamily. As to quaternary structure, monomer.

It localises to the cytoplasm. The catalysed reaction is tRNA(Val) + L-valine + ATP = L-valyl-tRNA(Val) + AMP + diphosphate. In terms of biological role, catalyzes the attachment of valine to tRNA(Val). As ValRS can inadvertently accommodate and process structurally similar amino acids such as threonine, to avoid such errors, it has a 'posttransfer' editing activity that hydrolyzes mischarged Thr-tRNA(Val) in a tRNA-dependent manner. The protein is Valine--tRNA ligase of Gloeobacter violaceus (strain ATCC 29082 / PCC 7421).